Here is a 143-residue protein sequence, read N- to C-terminus: Protein SLC31A2 (143 aa).

At 1–22 the chain is on the extracellular side; the sequence is MPMHFIFSDEAVLLFDFWRVHS. Residues 23-43 form a helical membrane-spanning segment; the sequence is PTGMALSVLVVLLLAVLYEGI. At 44-93 the chain is on the cytoplasmic side; sequence KVGKAKLLHKTLESLPATNSQQFILGPDQDSTGSRSTSDNRTRLRWFLCY. Residue Thr75 is modified to Phosphothreonine. Phosphoserine is present on Ser77. A helical membrane pass occupies residues 94–114; that stretch reads FGQSLVHVIQVVIGYFVMLAV. Topologically, residues 115 to 119 are extracellular; the sequence is MSYNT. Residues 120–140 form a helical membrane-spanning segment; sequence WIFLGVVLGSAVGYYLAYPLL. At 141–143 the chain is on the cytoplasmic side; that stretch reads NMT.

Belongs to the copper transporter (Ctr) (TC 1.A.56) family. SLC31A subfamily. Oligomer. Interacts with SLC31A1; this interaction stabilizes SLC31A2 and protects it from ubiquitination and the subsequent degradation. Post-translationally, ubiquitinated; ubiquitination and the subsequent proteasomal degradation are prevent by SLC31A1 that stabilizes it.

The protein resides in the membrane. It is found in the cytoplasmic vesicle membrane. Its subcellular location is the late endosome membrane. The protein localises to the lysosome membrane. It localises to the recycling endosome membrane. Functionally, does not function as a copper(1+) importer in vivo. However, in vitro functions as a low-affinity copper(1+) importer. Regulator of SLC31A1 which facilitates the cleavage of the SLC31A1 ecto-domain or which stabilizes the truncated form of SLC31A1 (Truncated CTR1 form), thereby drives the SLC31A1 truncated form-dependent endosomal copper export and modulates the copper and cisplatin accumulation via SLC31A1. This is Protein SLC31A2 from Mus musculus (Mouse).